Reading from the N-terminus, the 90-residue chain is Large ribosomal subunit protein uL23c (90 aa).

Belongs to the universal ribosomal protein uL23 family. In terms of assembly, part of the 50S ribosomal subunit.

It localises to the plastid. The protein resides in the chloroplast. Binds to 23S rRNA. This is Large ribosomal subunit protein uL23c (rpl23) from Psilotum nudum (Whisk fern).